Consider the following 86-residue polypeptide: Co-chaperonin GroES (86 aa).

This sequence belongs to the GroES chaperonin family. In terms of assembly, heptamer of 7 subunits arranged in a ring. Interacts with the chaperonin GroEL.

Its subcellular location is the cytoplasm. In terms of biological role, together with the chaperonin GroEL, plays an essential role in assisting protein folding. The GroEL-GroES system forms a nano-cage that allows encapsulation of the non-native substrate proteins and provides a physical environment optimized to promote and accelerate protein folding. GroES binds to the apical surface of the GroEL ring, thereby capping the opening of the GroEL channel. In Sulfurovum sp. (strain NBC37-1), this protein is Co-chaperonin GroES.